Here is a 129-residue protein sequence, read N- to C-terminus: Histone H2B.2 (129 aa).

Over residues methionine 1–proline 19 the composition is skewed to basic and acidic residues. Residues methionine 1–lysine 37 form a disordered region. N6-acetyllysine; alternate is present on residues lysine 7 and lysine 8. Glycyl lysine isopeptide (Lys-Gly) (interchain with G-Cter in SUMO); alternate cross-links involve residues lysine 7 and lysine 8. At serine 11 the chain carries Phosphoserine. Lysine 12 carries the N6-acetyllysine modification. Lysine 17 bears the N6-acetyllysine; alternate mark. A Glycyl lysine isopeptide (Lys-Gly) (interchain with G-Cter in SUMO); alternate cross-link involves residue lysine 17. Lysine 18 participates in a covalent cross-link: Glycyl lysine isopeptide (Lys-Gly) (interchain with G-Cter in SUMO). Residue lysine 123 forms a Glycyl lysine isopeptide (Lys-Gly) (interchain with G-Cter in ubiquitin) linkage.

It belongs to the histone H2B family. The nucleosome is a histone octamer containing two molecules each of H2A, H2B, H3 and H4 assembled in one H3-H4 heterotetramer and two H2A-H2B heterodimers. The octamer wraps approximately 147 bp of DNA. In terms of processing, monoubiquitinated by the UBC2-BRE1 complex to form H2BK123ub1. H2BK123ub1 gives a specific tag for epigenetic transcriptional activation and is also prerequisite for H3K4me and H3K79me formation. H2BK123ub1 also modulates the formation of double-strand breaks during meiosis and is a prerequisite for DNA-damage checkpoint activation. Phosphorylated by STE20 to form H2BS10ph during progression through meiotic prophase. May be correlated with chromosome condensation. Post-translationally, acetylated by GCN5 to form H2BK11ac and H2BK16ac. H2BK16ac can also be formed by ESA1. Acetylation of N-terminal lysines and particularly formation of H2BK11acK16ac has a positive effect on transcription. In terms of processing, sumoylation to form H2BK6su or H2BK7su, and probably also H2BK16su or H2BK17su, occurs preferentially near the telomeres and represses gene transcription.

It localises to the nucleus. The protein localises to the chromosome. In terms of biological role, core component of nucleosome. Nucleosomes wrap and compact DNA into chromatin, limiting DNA accessibility to the cellular machineries which require DNA as a template. Histones thereby play a central role in transcription regulation, DNA repair, DNA replication and chromosomal stability. DNA accessibility is regulated via a complex set of post-translational modifications of histones, also called histone code, and nucleosome remodeling. The chain is Histone H2B.2 (HTB2) from Meyerozyma guilliermondii (strain ATCC 6260 / CBS 566 / DSM 6381 / JCM 1539 / NBRC 10279 / NRRL Y-324) (Yeast).